A 218-amino-acid chain; its full sequence is Hypoxanthine-guanine phosphoribosyltransferase (218 aa).

Position 2 is an N-acetylalanine (A2). K69 lines the GMP pocket. N6-acetyllysine is present on K103. K115 participates in a covalent cross-link: Glycyl lysine isopeptide (Lys-Gly) (interchain with G-Cter in SUMO1); alternate. K115 participates in a covalent cross-link: Glycyl lysine isopeptide (Lys-Gly) (interchain with G-Cter in SUMO2); alternate. GMP is bound by residues 134–142 (EDIIDTGKT), K166, 186–188 (KFV), and D194. The active-site Proton acceptor is D138. T142 carries the post-translational modification Phosphothreonine. D194 provides a ligand contact to Mg(2+).

The protein belongs to the purine/pyrimidine phosphoribosyltransferase family. As to quaternary structure, homotetramer. Mg(2+) is required as a cofactor.

It localises to the cytoplasm. It carries out the reaction IMP + diphosphate = hypoxanthine + 5-phospho-alpha-D-ribose 1-diphosphate. It catalyses the reaction GMP + diphosphate = guanine + 5-phospho-alpha-D-ribose 1-diphosphate. It functions in the pathway purine metabolism; IMP biosynthesis via salvage pathway; IMP from hypoxanthine: step 1/1. Converts guanine to guanosine monophosphate, and hypoxanthine to inosine monophosphate. Transfers the 5-phosphoribosyl group from 5-phosphoribosylpyrophosphate onto the purine. Plays a central role in the generation of purine nucleotides through the purine salvage pathway. The chain is Hypoxanthine-guanine phosphoribosyltransferase (HPRT1) from Pan troglodytes (Chimpanzee).